The sequence spans 833 residues: Interleukin enhancer-binding factor 3 homolog (833 aa).

The DZF domain occupies 11-379; that stretch reads RIFVNDDRHV…PMKRPIEEES (369 aa). Disordered stretches follow at residues 65–86 and 339–403; these read VNALDTDGEGDKETEPSTGEQA and DPLP…KAEP. T70 carries the post-translational modification Phosphothreonine. The span at 373 to 385 shows a compositional bias: basic and acidic residues; sequence RPIEEESTDEKNP. DRBM domains are found at residues 402-471 and 527-593; these read EPAQ…DMGL and HGKN…KLFP. Disordered stretches follow at residues 597–651, 702–762, and 775–833; these read NSEV…FNQG, QSDS…GGGA, and AYPS…YQYR. The segment covering 629–639 has biased composition (basic residues); sequence GRGRGRGRGRG. Over residues 640–651 the composition is skewed to gly residues; sequence RGFNNGGGFNQG. Polar residues predominate over residues 775-818; it reads AYPSQVTGGQEYNYEGYSNQSNYNSQGGANQNFGGNSAPYNSGQ.

The protein localises to the nucleus. It localises to the nucleolus. The protein resides in the cytoplasm. Functionally, RNA-binding protein that plays an essential role in the biogenesis of circular RNAs (circRNAs) which are produced by back-splicing circularization of pre-mRNAs. Within the nucleus, promotes circRNAs processing by stabilizing the regulatory elements residing in the flanking introns of the circularized exons. Plays thereby a role in the back-splicing of a subset of circRNAs. As a consequence, participates in a wide range of transcriptional and post-transcriptional processes. Binds to poly-U elements and AU-rich elements (AREs) in the 3'-UTR of target mRNAs. Upon viral infection, ILF3 accumulates in the cytoplasm and participates in the innate antiviral response. Mechanistically, ILF3 becomes phosphorylated and activated by the double-stranded RNA-activated protein kinase/PKR which releases ILF3 from cellular mature circRNAs. In turn, unbound ILF3 molecules are able to interact with and thus inhibit viral mRNAs. This is Interleukin enhancer-binding factor 3 homolog (ilf3) from Danio rerio (Zebrafish).